Consider the following 258-residue polypeptide: Alpha-fibrinogenase albofibrase (258 aa).

A signal peptide spans 1–18 (MVLIRVLANLLILQLSYA). Residues 19 to 24 (QKSSEL) constitute a propeptide that is removed on maturation. The Peptidase S1 domain maps to 25–249 (VVGGDECNIN…YNDWIQSIIA (225 aa)). Intrachain disulfides connect C31–C163, C50–C66, C98–C256, C142–C210, C174–C189, and C200–C225. N44 carries an N-linked (GlcNAc...) asparagine glycan. Active-site charge relay system residues include H65 and D110. S204 (charge relay system) is an active-site residue.

It belongs to the peptidase S1 family. Snake venom subfamily. Monomer. Expressed by the venom gland.

The protein resides in the secreted. Functionally, the recombinant protein has fibrinogenolytic activity against the Aalpha chain (FGA) of fibrinogen. Activates plasminogen (PLG) (is 4-fold less active than urokinase). Has weak thrombin-like enzyme activity. Has enzymatic activity against a trypsin-like substrate (S-3013) and shows a weaker activity on an activated protein C substrate (S-3125). The polypeptide is Alpha-fibrinogenase albofibrase (Trimeresurus albolabris (White-lipped pit viper)).